The chain runs to 242 residues: Type III pantothenate kinase (242 aa).

7-14 (DLGNSRFK) provides a ligand contact to ATP. Residues tyrosine 91 and 98 to 101 (GVDR) each bind substrate. Aspartate 100 (proton acceptor) is an active-site residue. Threonine 121 lines the ATP pocket. A substrate-binding site is contributed by threonine 171.

It belongs to the type III pantothenate kinase family. In terms of assembly, homodimer. NH4(+) is required as a cofactor. The cofactor is K(+).

Its subcellular location is the cytoplasm. The enzyme catalyses (R)-pantothenate + ATP = (R)-4'-phosphopantothenate + ADP + H(+). Its pathway is cofactor biosynthesis; coenzyme A biosynthesis; CoA from (R)-pantothenate: step 1/5. In terms of biological role, catalyzes the phosphorylation of pantothenate (Pan), the first step in CoA biosynthesis. The polypeptide is Type III pantothenate kinase (Xanthomonas campestris pv. campestris (strain B100)).